A 643-amino-acid polypeptide reads, in one-letter code: Macrolide export ATP-binding/permease protein MacB (643 aa).

The ABC transporter domain occupies 4–242 (IEIKELNRYF…VNNQSKAKSR (239 aa)). Residue 40–47 (GQSGSGKS) coordinates ATP. 4 helical membrane-spanning segments follow: residues 269-289 (LLTMLGIIIGITSVVSVVALG), 523-543 (IAFISLIVGGIGVMNIMLVSV), 572-592 (ILICMIGGISGIMLSLIIGGI), and 603-623 (VFSTFSIVAAVLCSTLIGVIF).

This sequence belongs to the ABC transporter superfamily. Macrolide exporter (TC 3.A.1.122) family. Homodimer. Part of the tripartite efflux system MacAB-TolC, which is composed of an inner membrane transporter, MacB, a periplasmic membrane fusion protein, MacA, and an outer membrane component, TolC. The complex forms a large protein conduit and can translocate molecules across both the inner and outer membranes. Interacts with MacA.

The protein resides in the cell inner membrane. Part of the tripartite efflux system MacAB-TolC. MacB is a non-canonical ABC transporter that contains transmembrane domains (TMD), which form a pore in the inner membrane, and an ATP-binding domain (NBD), which is responsible for energy generation. Confers resistance against macrolides. This Mannheimia succiniciproducens (strain KCTC 0769BP / MBEL55E) protein is Macrolide export ATP-binding/permease protein MacB.